A 341-amino-acid polypeptide reads, in one-letter code: ATPase GET3 (341 aa).

34–41 (KGGVGKTT) lines the ATP pocket. The active site involves aspartate 63. Glutamate 245 and asparagine 272 together coordinate ATP. Positions 283 and 286 each coordinate Zn(2+).

This sequence belongs to the arsA ATPase family. In terms of assembly, homodimer.

The protein resides in the cytoplasm. Its subcellular location is the endoplasmic reticulum. ATPase required for the post-translational delivery of tail-anchored (TA) proteins to the endoplasmic reticulum. Recognizes and selectively binds the transmembrane domain of TA proteins in the cytosol. This complex then targets to the endoplasmic reticulum by membrane-bound receptors, where the tail-anchored protein is released for insertion. This process is regulated by ATP binding and hydrolysis. ATP binding drives the homodimer towards the closed dimer state, facilitating recognition of newly synthesized TA membrane proteins. ATP hydrolysis is required for insertion. Subsequently, the homodimer reverts towards the open dimer state, lowering its affinity for the membrane-bound receptor, and returning it to the cytosol to initiate a new round of targeting. This is ATPase GET3 from Ajellomyces capsulatus (strain G186AR / H82 / ATCC MYA-2454 / RMSCC 2432) (Darling's disease fungus).